The chain runs to 129 residues: MKSIQFCFFFCCWKAICCNGCELTNITITVEREECRFCISVNTTWCAGYCYTRDLVYRDPARPNIQKTCTFKELVYETVRVPGCAHHADSLYTYPVATECQCGKCDSDSTDCTVRGLGPSYCSFSEIKE.

The first 18 residues, 1–18 (MKSIQFCFFFCCWKAICC), serve as a signal peptide directing secretion. 6 cysteine pairs are disulfide-bonded: C21–C69, C35–C84, C38–C122, C46–C100, C50–C102, and C105–C112. N-linked (GlcNAc...) asparagine glycosylation is found at N25 and N42.

It belongs to the glycoprotein hormones subunit beta family. As to quaternary structure, heterodimer. The active follitropin is a heterodimer composed of an alpha chain/CGA shared with other hormones and a unique beta chain/FSHB shown here.

It localises to the secreted. In terms of biological role, together with the alpha chain CGA constitutes follitropin, the follicle-stimulating hormone, and provides its biological specificity to the hormone heterodimer. Binds FSHR, a G protein-coupled receptor, on target cells to activate downstream signaling pathways. Follitropin is involved in follicle development and spermatogenesis in reproductive organs. The protein is Follitropin subunit beta (FSHB) of Cavia porcellus (Guinea pig).